The following is a 370-amino-acid chain: Peptidyl-prolyl cis-trans isomerase D (370 aa).

Residue serine 5 is modified to Phosphoserine. The 165-residue stretch at 19–183 folds into the PPIase cyclophilin-type domain; sequence FFDVDIGGER…KLCVIAECGE (165 aa). Lysine 171 carries the N6-acetyllysine modification. The segment at 185-215 is chaperone activity; that stretch reads KEGDEWGIFPKDGSGDSHPDFPEDADIDLKD. Serine 198 is subject to Phosphoserine. Positions 214–370 are interaction with HSP90AB1; that stretch reads KDVDKILLIS…EKAVYAKMFA (157 aa). TPR repeat units lie at residues 223 to 256, 273 to 306, and 308 to 340; these read SEDL…LDSS, LSCV…DPSN, and KALY…APGD.

This sequence belongs to the cyclophilin-type PPIase family. PPIase D subfamily. In terms of assembly, identified in ESR1 or NR3C1/GCR steroid receptor-chaperone complexes. Found in HSP90 chaperone complexes with kinase clients LCK or EIF2AK1. Two monomers associate with one HSP90 homodimer. Interacts with HSP90AA1. Interacts with HSP90AB1; PPID and FKBP4 compete for binding to HSP90AB1 and the interaction is mutually exclusive with the PPID:HSPA8 interaction. Interacts with HSPA8; PPID and STIP1 but not FKBP4 compete for binding to HSPA8 and the interaction is mutually exclusive with the PPID:HSP90AB1 interaction. Interacts with S100A1 and S100A2; the interactions dissociate the PPID:HSP90AA1 interaction. Interacts with S100A6. Interacts with MYB, ILF2, XRCC6, RACK1 and RPS3. Interacts with cytoplasmic dynein 1 intermediate chain (DYNC1I1 or DYNC1I2).

The protein resides in the cytoplasm. The protein localises to the nucleus. It is found in the nucleolus. It localises to the nucleoplasm. It carries out the reaction [protein]-peptidylproline (omega=180) = [protein]-peptidylproline (omega=0). Less sensitive to inhibition by cyclosporin A than is CYP-18. In terms of biological role, PPIase that catalyzes the cis-trans isomerization of proline imidic peptide bonds in oligopeptides and may therefore assist protein folding. Proposed to act as a co-chaperone in HSP90 complexes such as in unligated steroid receptors heterocomplexes. Different co-chaperones seem to compete for association with HSP90 thus establishing distinct HSP90-co-chaperone-receptor complexes with the potential to exert tissue-specific receptor activity control. May have a preference for estrogen receptor complexes and is not found in glucocorticoid receptor complexes. May be involved in cytoplasmic dynein-dependent movement of the receptor from the cytoplasm to the nucleus. May regulate MYB by inhibiting its DNA-binding activity. Involved in regulation of AHR signaling by promoting the formation of the AHR:ARNT dimer; the function is independent of HSP90 but requires the chaperone activity region. Involved in regulation of UV radiation-induced apoptosis. The chain is Peptidyl-prolyl cis-trans isomerase D from Rattus norvegicus (Rat).